Consider the following 430-residue polypeptide: Probable WRKY transcription factor 14 (430 aa).

Positions 211-277 (SGEVVPSDLW…YTSEHNHPWP (67 aa)) form a DNA-binding region, WRKY. Positions 283–366 (LAGSTRSSTS…APYRPELHDH (84 aa)) are disordered. Over residues 286-306 (STRSSTSSSSNPNPSKPSTAN) the composition is skewed to low complexity. The span at 307–319 (VNSSSIGSQNTIY) shows a compositional bias: polar residues. A compositionally biased stretch (acidic residues) spans 340–354 (GDDMELENVDDDDDN).

The protein belongs to the WRKY group II-e family.

It localises to the nucleus. Functionally, transcription factor. Interacts specifically with the W box (5'-(T)TGAC[CT]-3'), a frequently occurring elicitor-responsive cis-acting element. The sequence is that of Probable WRKY transcription factor 14 (WRKY14) from Arabidopsis thaliana (Mouse-ear cress).